Reading from the N-terminus, the 301-residue chain is Ribosomal protein L11 methyltransferase (301 aa).

4 residues coordinate S-adenosyl-L-methionine: Thr146, Gly167, Asp189, and Asn234.

It belongs to the methyltransferase superfamily. PrmA family.

It is found in the cytoplasm. It catalyses the reaction L-lysyl-[protein] + 3 S-adenosyl-L-methionine = N(6),N(6),N(6)-trimethyl-L-lysyl-[protein] + 3 S-adenosyl-L-homocysteine + 3 H(+). Its function is as follows. Methylates ribosomal protein L11. This Acinetobacter baumannii (strain SDF) protein is Ribosomal protein L11 methyltransferase.